The following is a 338-amino-acid chain: Lipoate-protein ligase A (338 aa).

Positions 29–216 constitute a BPL/LPL catalytic domain; sequence PATQRVLFLW…AFFAHYGERV (188 aa). ATP-binding positions include R71, 76–79, and K134; that span reads GAVF. Residue K134 participates in (R)-lipoate binding.

The protein belongs to the LplA family. Monomer.

It is found in the cytoplasm. The enzyme catalyses L-lysyl-[lipoyl-carrier protein] + (R)-lipoate + ATP = N(6)-[(R)-lipoyl]-L-lysyl-[lipoyl-carrier protein] + AMP + diphosphate + H(+). The protein operates within protein modification; protein lipoylation via exogenous pathway; protein N(6)-(lipoyl)lysine from lipoate: step 1/2. It participates in protein modification; protein lipoylation via exogenous pathway; protein N(6)-(lipoyl)lysine from lipoate: step 2/2. Functionally, catalyzes both the ATP-dependent activation of exogenously supplied lipoate to lipoyl-AMP and the transfer of the activated lipoyl onto the lipoyl domains of lipoate-dependent enzymes. The sequence is that of Lipoate-protein ligase A from Escherichia coli O157:H7.